A 192-amino-acid polypeptide reads, in one-letter code: Interleukin-18 (192 aa).

Positions 1–35 are excised as a propeptide; that stretch reads MAAEPEDNCISFVEMKFINNTLYFVAENDEDLESD.

This sequence belongs to the IL-1 family. Forms a ternary complex with ligand-binding receptor subunit IL18R1 and signaling receptor subunit IL18RAP at the plasma membrane. Mature IL18 first binds to IL18R1 forming a low affinity binary complex, which then interacts with IL18RAP to form a high affinity ternary complex that signals inside the cell. Interacts with cargo receptor TMED10; the interaction mediates the translocation from the cytoplasm into the ERGIC (endoplasmic reticulum-Golgi intermediate compartment) and thereby secretion. Post-translationally, the pro-IL-18 precursor is processed by CASP1, CASP4 or CASP5 to yield its mature, active form. The pro-IL-18 precursor features autoinhibitory interactions between the propeptide and the post-cleavage-site region, preventing recognition by the IL18R1 receptor. Processing by CASP1, CASP4 or CASP5 induces conformational changes to generate critical receptor-binding sites. The mature form is then secreted and released in the extracellular milieu by passing through the gasdermin-D (GSDMD) pore. In contrast, cleavage by CASP3 inactivates IL18.

It is found in the cytoplasm. Its subcellular location is the cytosol. It localises to the secreted. Functionally, pro-inflammatory cytokine primarily involved in epithelial barrier repair, polarized T-helper 1 (Th1) cell and natural killer (NK) cell immune responses. Upon binding to IL18R1 and IL18RAP, forms a signaling ternary complex which activates NF-kappa-B, triggering synthesis of inflammatory mediators. Synergizes with IL12/interleukin-12 to induce IFNG synthesis from T-helper 1 (Th1) cells and natural killer (NK) cells. Involved in transduction of inflammation downstream of pyroptosis: its mature form is specifically released in the extracellular milieu by passing through the gasdermin-D (GSDMD) pore. The sequence is that of Interleukin-18 (IL18) from Sus scrofa (Pig).